Consider the following 429-residue polypeptide: Enolase (429 aa).

Glutamine 163 provides a ligand contact to (2R)-2-phosphoglycerate. Residue glutamate 205 is the Proton donor of the active site. Mg(2+)-binding residues include aspartate 242, glutamate 287, and aspartate 314. 4 residues coordinate (2R)-2-phosphoglycerate: lysine 339, arginine 368, serine 369, and lysine 390. The active-site Proton acceptor is the lysine 339.

This sequence belongs to the enolase family. It depends on Mg(2+) as a cofactor.

The protein localises to the cytoplasm. Its subcellular location is the secreted. It localises to the cell surface. It catalyses the reaction (2R)-2-phosphoglycerate = phosphoenolpyruvate + H2O. Its pathway is carbohydrate degradation; glycolysis; pyruvate from D-glyceraldehyde 3-phosphate: step 4/5. Functionally, catalyzes the reversible conversion of 2-phosphoglycerate (2-PG) into phosphoenolpyruvate (PEP). It is essential for the degradation of carbohydrates via glycolysis. The chain is Enolase from Anaeromyxobacter sp. (strain Fw109-5).